The sequence spans 183 residues: MAQRSGKITLYEGKHFTGRKLEVFGDCDNFQDQGFMNRVNSIRVESGAWVCFDHPDFRGQQFILEHGDYPEFFRWNGHNDHMGSCRPVGMHGEHFRIDIFEGCNFTGQCLEFVEDCPFLQSRGWAKSCVNAIKVYGDGAWVLYEEPNYRGRMYVLERGDYRCFSDWGAHSARVQSLRRVLNFF.

4 consecutive Beta/gamma crystallin 'Greek key' domains span residues Gly-6–Ser-46, Gly-47–Gly-89, Phe-95–Gly-136, and Gly-138–Leu-180.

The protein belongs to the beta/gamma-crystallin family. Monomer. As to expression, primordially eye-specific. Present in lens nucleus. In the retina, expression in observed in the outer plexiform layer (containing photoreceptors axons and synapses) and photoreceptor outer segments (at protein level). Also detected in the auditory hindbrain where it is highly expressed in the medial nucleus of the trapezoid body, but also present in other nuclei of the superior olivary complex.

Crystallins are the dominant structural components of the vertebrate eye lens. Also plays an important role for integrity and function of auditory nuclei. The sequence is that of Gamma-crystallin N from Mus musculus (Mouse).